Here is a 238-residue protein sequence, read N- to C-terminus: MRKLILISLCIFFLASCSELQEVRDIKNAGMPPKYYPEPPQTQVASEGSLWRNKASLYEDKKARRVNDLVTILINESTSAQKTASTTASRDSSTNYGLDTFFGMNTDFNIHNLPLINGFYKAGNVFSPSVKGSATSDFKGDGDTARTGKITGTITAKVVEVLPNGNLVIESRKEVIVNNEKEILVLRGIIRPDDISQSNTILSQYVADAQIYLVGEGTLGDKQSQGWLVRFLDKIWPF.

The signal sequence occupies residues 1 to 16 (MRKLILISLCIFFLAS). C17 carries N-palmitoyl cysteine lipidation. C17 is lipidated: S-diacylglycerol cysteine.

Belongs to the FlgH family. As to quaternary structure, the basal body constitutes a major portion of the flagellar organelle and consists of four rings (L,P,S, and M) mounted on a central rod.

The protein resides in the cell outer membrane. The protein localises to the bacterial flagellum basal body. Functionally, assembles around the rod to form the L-ring and probably protects the motor/basal body from shearing forces during rotation. In Thermodesulfovibrio yellowstonii (strain ATCC 51303 / DSM 11347 / YP87), this protein is Flagellar L-ring protein.